We begin with the raw amino-acid sequence, 2269 residues long: Neuron navigator 3 (2269 aa).

A Calponin-homology (CH) domain is found at serine 55 to glutamine 162. Polar residues predominate over residues threonine 186–tyrosine 207. Disordered regions lie at residues threonine 186–leucine 358 and serine 388–serine 532. Residues glycine 236–serine 252 show a composition bias toward low complexity. 2 stretches are compositionally biased toward polar residues: residues alanine 267–alanine 291 and serine 305–leucine 319. Positions proline 323 to proline 333 are enriched in pro residues. Over residues alanine 346–serine 356 the composition is skewed to polar residues. Positions proline 411–serine 432 are enriched in low complexity. Over residues threonine 505–proline 518 the composition is skewed to polar residues. Residues glutamate 644 to glutamine 672 adopt a coiled-coil conformation. Disordered regions lie at residues glycine 692–valine 737, alanine 756–glutamate 776, valine 836–proline 1036, serine 1050–aspartate 1079, valine 1097–cysteine 1412, and glycine 1461–valine 1487. Composition is skewed to polar residues over residues serine 699 to arginine 716 and proline 727 to valine 737. The segment covering aspartate 847 to aspartate 860 has biased composition (low complexity). Residues glycine 874–asparagine 886 are compositionally biased toward polar residues. The span at proline 919–cysteine 932 shows a compositional bias: low complexity. Residues glutamine 939 to serine 950 are compositionally biased toward polar residues. A compositionally biased stretch (basic and acidic residues) spans glycine 977 to lysine 989. The segment covering serine 1110–lysine 1137 has biased composition (low complexity). Positions glycine 1163–glutamine 1172 are enriched in polar residues. Low complexity-rich tracts occupy residues glycine 1185–glycine 1202 and glycine 1223–glycine 1234. Positions glycine 1266–glycine 1276 are enriched in gly residues. Residues serine 1292–serine 1305 show a composition bias toward low complexity. Polar residues-rich tracts occupy residues asparagine 1313–serine 1339 and arginine 1354–serine 1363. The segment covering threonine 1381–arginine 1391 has biased composition (basic and acidic residues). Over residues serine 1392–cysteine 1412 the composition is skewed to polar residues. The stretch at serine 1499–alanine 1586 forms a coiled coil. 3 disordered regions span residues glutamine 1602 to proline 1672, asparagine 1756 to serine 1792, and glycine 2207 to leucine 2269. 2 stretches are compositionally biased toward low complexity: residues serine 1605–alanine 1623 and threonine 1765–serine 1792. The stretch at cysteine 1697–threonine 1765 forms a coiled coil. A compositionally biased stretch (polar residues) spans tyrosine 2208–aspartate 2224.

It belongs to the Nav/unc-53 family. In terms of assembly, interacts with F-actin.

It localises to the nucleus outer membrane. The protein localises to the golgi apparatus. The protein resides in the cell projection. Its subcellular location is the lamellipodium. It is found in the filopodium. In terms of biological role, involved in liver and heart organogenesis during embryo development. Plays a role in the migration of hepatoblasts from the intestinal endoderm during liver organogenesis; possibly by modulating actin polymerization during hepatoblast outgrowth. May be involved in neuron regeneration. This is Neuron navigator 3 (nav3) from Danio rerio (Zebrafish).